A 495-amino-acid chain; its full sequence is Glutamate--tRNA ligase (495 aa).

Residues 14 to 24 carry the 'HIGH' region motif; that stretch reads PSPTGYLHIGS. A 'KMSKS' region motif is present at residues 255–259; it reads KLSKR. Lysine 258 serves as a coordination point for ATP.

The protein belongs to the class-I aminoacyl-tRNA synthetase family. Glutamate--tRNA ligase type 1 subfamily. Monomer.

It localises to the cytoplasm. The enzyme catalyses tRNA(Glu) + L-glutamate + ATP = L-glutamyl-tRNA(Glu) + AMP + diphosphate. In terms of biological role, catalyzes the attachment of glutamate to tRNA(Glu) in a two-step reaction: glutamate is first activated by ATP to form Glu-AMP and then transferred to the acceptor end of tRNA(Glu). This is Glutamate--tRNA ligase from Herpetosiphon aurantiacus (strain ATCC 23779 / DSM 785 / 114-95).